The primary structure comprises 119 residues: Large ribosomal subunit protein bL20 (119 aa).

It belongs to the bacterial ribosomal protein bL20 family.

Its function is as follows. Binds directly to 23S ribosomal RNA and is necessary for the in vitro assembly process of the 50S ribosomal subunit. It is not involved in the protein synthesizing functions of that subunit. This chain is Large ribosomal subunit protein bL20, found in Shewanella frigidimarina (strain NCIMB 400).